The primary structure comprises 177 residues: Large ribosomal subunit protein uL6 (177 aa).

This sequence belongs to the universal ribosomal protein uL6 family. As to quaternary structure, part of the 50S ribosomal subunit.

Functionally, this protein binds to the 23S rRNA, and is important in its secondary structure. It is located near the subunit interface in the base of the L7/L12 stalk, and near the tRNA binding site of the peptidyltransferase center. The protein is Large ribosomal subunit protein uL6 of Methylorubrum extorquens (strain CM4 / NCIMB 13688) (Methylobacterium extorquens).